The primary structure comprises 899 residues: Bifunctional uridylyltransferase/uridylyl-removing enzyme (899 aa).

The segment at 1–342 (MPQMDPELFD…RAGESGPATP (342 aa)) is uridylyltransferase. Residues 343-705 (LNSRFQVRDG…TTQREFEGGT (363 aa)) are uridylyl-removing. Residues 461–583 (VDAHTLNLIK…VGDQTHLDYL (123 aa)) enclose the HD domain. 2 ACT domains span residues 706-784 (QIFI…DEYP) and 816-897 (ILEL…SLQI).

This sequence belongs to the GlnD family. Mg(2+) is required as a cofactor.

It catalyses the reaction [protein-PII]-L-tyrosine + UTP = [protein-PII]-uridylyl-L-tyrosine + diphosphate. The catalysed reaction is [protein-PII]-uridylyl-L-tyrosine + H2O = [protein-PII]-L-tyrosine + UMP + H(+). Its activity is regulated as follows. Uridylyltransferase (UTase) activity is inhibited by glutamine, while glutamine activates uridylyl-removing (UR) activity. Modifies, by uridylylation and deuridylylation, the PII regulatory proteins (GlnB and homologs), in response to the nitrogen status of the cell that GlnD senses through the glutamine level. Under low glutamine levels, catalyzes the conversion of the PII proteins and UTP to PII-UMP and PPi, while under higher glutamine levels, GlnD hydrolyzes PII-UMP to PII and UMP (deuridylylation). Thus, controls uridylylation state and activity of the PII proteins, and plays an important role in the regulation of nitrogen assimilation and metabolism. In Ectopseudomonas mendocina (strain ymp) (Pseudomonas mendocina), this protein is Bifunctional uridylyltransferase/uridylyl-removing enzyme.